The sequence spans 215 residues: 16S rRNA (adenine(1408)-N(1))-methyltransferase (215 aa).

S-adenosyl-L-methionine contacts are provided by residues G32, D55, 87-88 (AE), 102-107 (LMPWGS), and 191-193 (TSW).

The protein belongs to the methyltransferase superfamily. Kanamycin-apramycin resistance family.

The enzyme catalyses adenosine(1408) in 16S rRNA + S-adenosyl-L-methionine = N(1)-methyladenosine(1408) in 16S rRNA + S-adenosyl-L-homocysteine + H(+). In terms of biological role, specifically methylates the N(1) position of adenine 1408 in 16S rRNA. Confers resistance to various aminoglycosides, including kanamycin, neomycin and apramycin. In Streptoalloteichus tenebrarius (strain ATCC 17920 / DSM 40477 / JCM 4838 / CBS 697.72 / NBRC 16177 / NCIMB 11028 / NRRL B-12390 / A12253. 1 / ISP 5477) (Streptomyces tenebrarius), this protein is 16S rRNA (adenine(1408)-N(1))-methyltransferase (kamB).